The following is a 145-amino-acid chain: Bacilliredoxin SERP1075 (145 aa).

It belongs to the bacilliredoxin family.

In Staphylococcus epidermidis (strain ATCC 35984 / DSM 28319 / BCRC 17069 / CCUG 31568 / BM 3577 / RP62A), this protein is Bacilliredoxin SERP1075.